The primary structure comprises 274 residues: Thiamine kinase (274 aa).

The protein belongs to the thiamine kinase family.

It catalyses the reaction thiamine + ATP = thiamine phosphate + ADP + H(+). It participates in cofactor biosynthesis; thiamine diphosphate biosynthesis; thiamine phosphate from thiamine: step 1/1. Catalyzes the ATP-dependent phosphorylation of thiamine to thiamine phosphate. Is involved in thiamine salvage. This Escherichia coli O17:K52:H18 (strain UMN026 / ExPEC) protein is Thiamine kinase.